The following is a 170-amino-acid chain: Copper transporter 1 (170 aa).

Residues Met-1–Met-29 are disordered. The segment covering Met-9–Met-29 has biased composition (low complexity). 2 helical membrane passes run Gly-65 to Ala-85 and Ile-114 to Val-134.

The protein belongs to the copper transporter (Ctr) (TC 1.A.56) family. SLC31A subfamily. As to expression, expressed in the root apex, lateral root primordia, embryo, trichomes, guard cells and pollen grains.

The protein localises to the membrane. Its function is as follows. Copper transporter involved in copper acquisition and transport in leaves. Required for copper homeostasis and normal plant growth and development. The protein is Copper transporter 1 (COPT1) of Arabidopsis thaliana (Mouse-ear cress).